Consider the following 334-residue polypeptide: Anthranilate phosphoribosyltransferase (334 aa).

5-phospho-alpha-D-ribose 1-diphosphate contacts are provided by residues Gly79, 82 to 83 (GD), Ser87, 89 to 92 (NIST), 107 to 115 (KAGNRSISS), and Ser119. Residue Gly79 coordinates anthranilate. Ser91 is a binding site for Mg(2+). Residue Asn110 coordinates anthranilate. An anthranilate-binding site is contributed by Arg165. 2 residues coordinate Mg(2+): Asp224 and Glu225.

The protein belongs to the anthranilate phosphoribosyltransferase family. Homodimer. The cofactor is Mg(2+).

The enzyme catalyses N-(5-phospho-beta-D-ribosyl)anthranilate + diphosphate = 5-phospho-alpha-D-ribose 1-diphosphate + anthranilate. It functions in the pathway amino-acid biosynthesis; L-tryptophan biosynthesis; L-tryptophan from chorismate: step 2/5. Functionally, catalyzes the transfer of the phosphoribosyl group of 5-phosphorylribose-1-pyrophosphate (PRPP) to anthranilate to yield N-(5'-phosphoribosyl)-anthranilate (PRA). This chain is Anthranilate phosphoribosyltransferase, found in Streptococcus thermophilus (strain CNRZ 1066).